Consider the following 688-residue polypeptide: Eukaryotic translation initiation factor 3 subunit B (688 aa).

Residues 1-32 form a disordered region; the sequence is MAKKKGENYDSDGGDDQDYDEEPNFDDPEGFV. Residues 9 to 32 are compositionally biased toward acidic residues; that stretch reads YDSDGGDDQDYDEEPNFDDPEGFV. Positions 57 to 141 constitute an RRM domain; it reads NVIVVDNIPV…HTLLVNLFSD (85 aa). WD repeat units follow at residues 208–246, 247–287, 291–329, 332–367, 440–482, and 527–572; these read RDRFTETYVKWSPLGTYIVTFHKQGVVIWGGSNFTKINK, FPHS…EKRS, DGTSNMSMFRWSHDDKYVARMGDNAIHVYETSTFYLLDK, IKVQGIRNFSWSPTDNIIAYWMSEDLEAPARVTLLE, EVKE…EPTM, and GDHF…KRVN. Residues 613–642 are a coiled coil; it reads RIRMTRASKELLEKRAKLREQFVEYRTKRV.

Belongs to the eIF-3 subunit B family. As to quaternary structure, component of the eukaryotic translation initiation factor 3 (eIF-3) complex.

The protein localises to the cytoplasm. RNA-binding component of the eukaryotic translation initiation factor 3 (eIF-3) complex, which is involved in protein synthesis of a specialized repertoire of mRNAs and, together with other initiation factors, stimulates binding of mRNA and methionyl-tRNAi to the 40S ribosome. The eIF-3 complex specifically targets and initiates translation of a subset of mRNAs involved in cell proliferation. The sequence is that of Eukaryotic translation initiation factor 3 subunit B from Aedes aegypti (Yellowfever mosquito).